The primary structure comprises 436 residues: GTPase Obg (436 aa).

The Obg domain occupies 2–160; the sequence is SMFLDTAKIQ…RELLLELKVL (159 aa). Residues 161 to 338 enclose the OBG-type G domain; it reads ADVGLVGFPS…LLDATAELLD (178 aa). GTP contacts are provided by residues 167–174, 192–196, 214–217, 284–287, and 319–321; these read GFPSVGKS, FTTIV, DLPG, NKMD, and SSL. Residues Ser-174 and Thr-194 each coordinate Mg(2+). The 79-residue stretch at 358–436 folds into the OCT domain; sequence GFDEEAPAFE…IGKFEFEFVD (79 aa).

The protein belongs to the TRAFAC class OBG-HflX-like GTPase superfamily. OBG GTPase family. Monomer. It depends on Mg(2+) as a cofactor.

It is found in the cytoplasm. Functionally, an essential GTPase which binds GTP, GDP and possibly (p)ppGpp with moderate affinity, with high nucleotide exchange rates and a fairly low GTP hydrolysis rate. Plays a role in control of the cell cycle, stress response, ribosome biogenesis and in those bacteria that undergo differentiation, in morphogenesis control. The chain is GTPase Obg from Streptococcus sanguinis (strain SK36).